A 904-amino-acid chain; its full sequence is Dual specificity tyrosine-phosphorylation-regulated kinase mbk-1 (904 aa).

Disordered stretches follow at residues 1-151, 250-272, and 285-345; these read MNSG…MPPE, TVGRHTSLDSSGKPKTGKEASSS, and AVPN…YNNG. Over residues 9–23 the composition is skewed to polar residues; the sequence is NLQAWGQQPSSSYSN. A compositionally biased stretch (low complexity) spans 24–35; it reads TQQQHGQITGQI. Residues 59–75 show a composition bias toward basic and acidic residues; sequence ELEKSKKIAEQPTEHPQ. Residues 112–123 are compositionally biased toward low complexity; that stretch reads NNSNSQNFFPQQ. The segment covering 286–297 has biased composition (polar residues); the sequence is VPNTSSSGNQPH. The Protein kinase domain occupies 367–690; sequence ILSDTPVGKG…TLFPVSHTAY (324 aa). ATP-binding positions include 373–381 and Lys396; that span reads VGKGSFGQV. The active-site Proton acceptor is Asp495. Disordered stretches follow at residues 717–830 and 881–904; these read YRPV…DQAE and MSHGNVNAGSSRDMEKHDYPNNKL. Over residues 721-733 the composition is skewed to polar residues; sequence PTSSHPISVTSSF. Over residues 749 to 820 the composition is skewed to low complexity; that stretch reads SQQNYHNPNY…VQQHSSSSSR (72 aa). Polar residues predominate over residues 881 to 890; sequence MSHGNVNAGS. The span at 892-904 shows a compositional bias: basic and acidic residues; sequence RDMEKHDYPNNKL.

Belongs to the protein kinase superfamily. CMGC Ser/Thr protein kinase family. MNB/DYRK subfamily. The cofactor is Mg(2+).

The protein resides in the nucleus. It carries out the reaction L-seryl-[protein] + ATP = O-phospho-L-seryl-[protein] + ADP + H(+). It catalyses the reaction L-threonyl-[protein] + ATP = O-phospho-L-threonyl-[protein] + ADP + H(+). The enzyme catalyses L-tyrosyl-[protein] + ATP = O-phospho-L-tyrosyl-[protein] + ADP + H(+). Functionally, possible role in the function of olfactory neurons. This Caenorhabditis briggsae protein is Dual specificity tyrosine-phosphorylation-regulated kinase mbk-1.